Consider the following 550-residue polypeptide: Chaperonin GroEL (550 aa).

ATP-binding positions include 30–33 (TLGP), Lys51, 87–91 (DGTTT), Gly415, 481–483 (NAA), and Asp497.

Belongs to the chaperonin (HSP60) family. As to quaternary structure, forms a cylinder of 14 subunits composed of two heptameric rings stacked back-to-back. Interacts with the co-chaperonin GroES.

The protein resides in the cytoplasm. It carries out the reaction ATP + H2O + a folded polypeptide = ADP + phosphate + an unfolded polypeptide.. Together with its co-chaperonin GroES, plays an essential role in assisting protein folding. The GroEL-GroES system forms a nano-cage that allows encapsulation of the non-native substrate proteins and provides a physical environment optimized to promote and accelerate protein folding. The chain is Chaperonin GroEL from Photobacterium profundum (strain SS9).